The chain runs to 31 residues: ACSRAGENCYKSGRCCDGLYCKAYVVTCYKP.

Cystine bridges form between cysteine 2-cysteine 16, cysteine 9-cysteine 21, and cysteine 15-cysteine 28.

As to expression, expressed by the venom gland.

The protein resides in the secreted. Insecticidal toxin that induces reversible paralysis in crickets but not in cockroaches and mice. Molecular target unknown. This is U1-theraphotoxin-Cv1a from Coremiocnemis valida (Singapore tarantula).